Reading from the N-terminus, the 365-residue chain is tRNA(Met) cytidine acetate ligase (365 aa).

ATP contacts are provided by residues 7 to 20 (IAEF…HKYL), glycine 96, asparagine 152, and arginine 175.

The protein belongs to the TmcAL family.

It localises to the cytoplasm. The enzyme catalyses cytidine(34) in elongator tRNA(Met) + acetate + ATP = N(4)-acetylcytidine(34) in elongator tRNA(Met) + AMP + diphosphate. Functionally, catalyzes the formation of N(4)-acetylcytidine (ac(4)C) at the wobble position of elongator tRNA(Met), using acetate and ATP as substrates. First activates an acetate ion to form acetyladenylate (Ac-AMP) and then transfers the acetyl group to tRNA to form ac(4)C34. This Streptococcus pneumoniae (strain ATCC BAA-255 / R6) protein is tRNA(Met) cytidine acetate ligase.